A 265-amino-acid chain; its full sequence is 3-methyl-2-oxobutanoate hydroxymethyltransferase (265 aa).

2 residues coordinate Mg(2+): Asp46 and Asp85. 3-methyl-2-oxobutanoate contacts are provided by residues 46 to 47 (DS), Asp85, and Lys114. Glu116 contributes to the Mg(2+) binding site. The active-site Proton acceptor is Glu183.

This sequence belongs to the PanB family. In terms of assembly, homodecamer; pentamer of dimers. It depends on Mg(2+) as a cofactor.

It is found in the cytoplasm. The enzyme catalyses 3-methyl-2-oxobutanoate + (6R)-5,10-methylene-5,6,7,8-tetrahydrofolate + H2O = 2-dehydropantoate + (6S)-5,6,7,8-tetrahydrofolate. It functions in the pathway cofactor biosynthesis; coenzyme A biosynthesis. In terms of biological role, catalyzes the reversible reaction in which hydroxymethyl group from 5,10-methylenetetrahydrofolate is transferred onto alpha-ketoisovalerate to form ketopantoate. The polypeptide is 3-methyl-2-oxobutanoate hydroxymethyltransferase (Pyrobaculum calidifontis (strain DSM 21063 / JCM 11548 / VA1)).